The chain runs to 314 residues: Ribosomal RNA small subunit methyltransferase H (314 aa).

Residues 40–42 (GGH), Asp-60, Phe-85, Asp-107, and Gln-114 contribute to the S-adenosyl-L-methionine site.

It belongs to the methyltransferase superfamily. RsmH family.

It localises to the cytoplasm. The enzyme catalyses cytidine(1402) in 16S rRNA + S-adenosyl-L-methionine = N(4)-methylcytidine(1402) in 16S rRNA + S-adenosyl-L-homocysteine + H(+). In terms of biological role, specifically methylates the N4 position of cytidine in position 1402 (C1402) of 16S rRNA. This is Ribosomal RNA small subunit methyltransferase H from Hydrogenovibrio crunogenus (strain DSM 25203 / XCL-2) (Thiomicrospira crunogena).